The sequence spans 180 residues: Nucleoside triphosphate/diphosphate phosphatase (180 aa).

R26 acts as the Proton donor in catalysis. Positions 90, 106, 108, 110, 123, and 126 each coordinate Mg(2+).

It belongs to the Ntdp family. It depends on Mg(2+) as a cofactor.

The catalysed reaction is a ribonucleoside 5'-triphosphate + H2O = a ribonucleoside 5'-diphosphate + phosphate + H(+). The enzyme catalyses a ribonucleoside 5'-diphosphate + H2O = a ribonucleoside 5'-phosphate + phosphate + H(+). In terms of biological role, has nucleoside phosphatase activity towards nucleoside triphosphates and nucleoside diphosphates. This is Nucleoside triphosphate/diphosphate phosphatase from Staphylococcus epidermidis (strain ATCC 35984 / DSM 28319 / BCRC 17069 / CCUG 31568 / BM 3577 / RP62A).